The following is a 396-amino-acid chain: N-terminal EF-hand calcium-binding protein 3 (396 aa).

Positions 14-34 (PPAPQPQPQTPRHPQLAPDPG) are enriched in pro residues. The tract at residues 14-36 (PPAPQPQPQTPRHPQLAPDPGPA) is disordered. Residues 36–71 (AGHTLFQDVFRRADKNDDGKLSFEEFQNYFADGVLS) form the EF-hand domain. Ca(2+) contacts are provided by Asp-49, Asn-51, Asp-53, Lys-55, and Glu-60. The tract at residues 181-190 (VEAQSRLCGS) is required for interaction with APBA3. The segment at 197–220 (ALRSVSRSSTWSPGSSDTGRSSEA) is disordered. A compositionally biased stretch (polar residues) spans 206 to 217 (TWSPGSSDTGRS). Residues 296–385 (LMAQRQVQVA…RAPDTLTTVF (90 aa)) form the ABM domain.

In terms of assembly, interacts with the N-terminal domain of APBA2. Interacts with NEK2. Interacts with APBA3; APBA3 seems to mediate the interaction between NECAB3 and HIF1AN. In terms of processing, phosphorylated by NEK2. Strongly expressed in heart and skeletal muscle, moderately in brain and pancreas.

Its subcellular location is the golgi apparatus. Inhibits the interaction of APBA2 with amyloid-beta precursor protein (APP), and hence allows formation of amyloid-beta. May enhance the activity of HIF1A and thus promote glycolysis under normoxic conditions; the function requires its ABM domain and may implicate the stabilization of the interaction between HIF1AN and APBA3. The chain is N-terminal EF-hand calcium-binding protein 3 (NECAB3) from Homo sapiens (Human).